Reading from the N-terminus, the 424-residue chain is Glutamate-1-semialdehyde 2,1-aminomutase (424 aa).

N6-(pyridoxal phosphate)lysine is present on Lys263.

The protein belongs to the class-III pyridoxal-phosphate-dependent aminotransferase family. HemL subfamily. As to quaternary structure, homodimer. The cofactor is pyridoxal 5'-phosphate.

It localises to the cytoplasm. The catalysed reaction is (S)-4-amino-5-oxopentanoate = 5-aminolevulinate. Its pathway is porphyrin-containing compound metabolism; protoporphyrin-IX biosynthesis; 5-aminolevulinate from L-glutamyl-tRNA(Glu): step 2/2. In Campylobacter jejuni subsp. jejuni serotype O:6 (strain 81116 / NCTC 11828), this protein is Glutamate-1-semialdehyde 2,1-aminomutase.